Reading from the N-terminus, the 637-residue chain is 5-hmdU DNA kinase (637 aa).

Residues 249 to 269 (AEKGVKRGKKGRKTSPVAKTL) form a disordered region.

The protein belongs to the thymidylate kinase family. 5-hmdU DNA kinase subfamily.

The enzyme catalyses 5-hydroxymethyl-dUMP in DNA + ATP = 5-phosphomethyl-dUMP in DNA + ADP + H(+). Functionally, phosphorylates 5-hydroxymethyluracil (5hmdU) into 5-phosphomethyl-2'-deoxyuridine (5- PmdU) on DNA as a step in the pathway leading to thymidine hypermodifications in the viral genome. The phosphate is added internally to the DNA polymer. As a final result of the pathway of hypermodification, alpha-glutamylthymidine (YdTMP) substitutes for about 20% of the thymidines in the viral DNA, the 80% left are dTMP. These modifications probably prevent degradation of viral genome by the host restriction-modification antiviral defense system. This is 5-hmdU DNA kinase from Bacillus phage SP10 (Bacillus phage SP-10).